We begin with the raw amino-acid sequence, 429 residues long: Serine/threonine-protein kinase BGLF4 (429 aa).

Residues 1–27 (MDVNMAAELSPTNSSSSGELSVSPEPP) form a disordered region. The 409-residue stretch at 1–409 (MDVNMAAELS…CRPRFEHPHL (409 aa)) folds into the Protein kinase domain. The segment covering 14 to 23 (SSSSGELSVS) has biased composition (low complexity). The interval 36–40 (KVTVI) is SUMO interaction motif. ATP contacts are provided by residues 110 to 118 (LYHELMVCD) and glutamate 128. The active-site Proton acceptor is the aspartate 195. Residues 344-350 (VVLLEVL) are SUMO interaction motif.

It belongs to the protein kinase superfamily. Ser/Thr protein kinase family. As to quaternary structure, interacts with host NUP62 and NUP153; this interaction plays a role in nuclear targeting of BGLF4. Interacts with host SUMO1 and SUMO2.

The protein resides in the virion tegument. Its subcellular location is the host nucleus. The enzyme catalyses L-seryl-[protein] + ATP = O-phospho-L-seryl-[protein] + ADP + H(+). It carries out the reaction L-threonyl-[protein] + ATP = O-phospho-L-threonyl-[protein] + ADP + H(+). Functionally, plays many key roles by phosphorylating several proteins including the viral DNA processivity factor BMRF1, EBNA1 or EBNA2. Modifies the host nuclear envelope structure and induces the redistribution of nuclear envelope-associated proteins by phosphorylating host nucleoporins. Subsequently, promotes the nuclear transport of EBV lytic proteins. Required for efficient lytic DNA replication and release of nucleocapsids from the nucleus. Contributes to the compaction of host cell chromatin in cells undergoing lytic replication, presumably by phosphorylating the host condensin complex and host TOP2A. Induces disassembly of the nuclear lamina by phosphorylating with host LMNA. Phosphorylates substrates involved in capsid assembly and DNA packaging. Facilitates the switch from latent to lytic DNA replication by down-regulating EBNA1 replication function. Phosphorylates the viral immediate-early protein BZLF1 and inhibits its sumoylation by interacting with host SUMO1 and SUMO2. Phosphorylates also host SAMHD1 and thereby counteracts its antiviral effect by reducing its dNTP hydrolase activity. In Epstein-Barr virus (strain AG876) (HHV-4), this protein is Serine/threonine-protein kinase BGLF4.